The chain runs to 353 residues: UDP-N-acetylglucosamine--N-acetylmuramyl-(pentapeptide) pyrophosphoryl-undecaprenol N-acetylglucosamine transferase (353 aa).

Residues 10 to 12, Asn124, Ser183, and Gln283 contribute to the UDP-N-acetyl-alpha-D-glucosamine site; that span reads TGG.

Belongs to the glycosyltransferase 28 family. MurG subfamily.

Its subcellular location is the cell inner membrane. It catalyses the reaction di-trans,octa-cis-undecaprenyl diphospho-N-acetyl-alpha-D-muramoyl-L-alanyl-D-glutamyl-meso-2,6-diaminopimeloyl-D-alanyl-D-alanine + UDP-N-acetyl-alpha-D-glucosamine = di-trans,octa-cis-undecaprenyl diphospho-[N-acetyl-alpha-D-glucosaminyl-(1-&gt;4)]-N-acetyl-alpha-D-muramoyl-L-alanyl-D-glutamyl-meso-2,6-diaminopimeloyl-D-alanyl-D-alanine + UDP + H(+). The protein operates within cell wall biogenesis; peptidoglycan biosynthesis. Cell wall formation. Catalyzes the transfer of a GlcNAc subunit on undecaprenyl-pyrophosphoryl-MurNAc-pentapeptide (lipid intermediate I) to form undecaprenyl-pyrophosphoryl-MurNAc-(pentapeptide)GlcNAc (lipid intermediate II). This is UDP-N-acetylglucosamine--N-acetylmuramyl-(pentapeptide) pyrophosphoryl-undecaprenol N-acetylglucosamine transferase from Helicobacter pylori (strain HPAG1).